The sequence spans 156 residues: Snaclec trimecetin subunit alpha (156 aa).

A signal peptide spans methionine 1–alanine 23. 3 disulfide bridges follow: cysteine 25/cysteine 36, cysteine 53/cysteine 150, and cysteine 125/cysteine 142. The C-type lectin domain maps to phenylalanine 32–lysine 151.

Belongs to the snaclec family. In terms of assembly, heterodimer of subunits alpha and beta; disulfide-linked. Expressed by the venom gland.

It localises to the secreted. Functionally, snaclec that induces platelet aggregation in either human platelet rich plasma (PRP) or washed platelet suspensions. It causes aggregation in a dose-dependent manner even in the absence of various platelet agonists such as ADP or von Willebrand factor (vWF). Interestingly, it does not induce aggregation in rabbit PRP. A monoclonal antibody against the platelet GPIb receptor blocks the aggregation induced by trimecetin, suggesting that it acts by binding to GPIb (GP1BA/GP1BB). In Protobothrops mucrosquamatus (Taiwan habu), this protein is Snaclec trimecetin subunit alpha.